Reading from the N-terminus, the 133-residue chain is ATP synthase epsilon chain (133 aa).

The protein belongs to the ATPase epsilon chain family. In terms of assembly, F-type ATPases have 2 components, CF(1) - the catalytic core - and CF(0) - the membrane proton channel. CF(1) has five subunits: alpha(3), beta(3), gamma(1), delta(1), epsilon(1). CF(0) has three main subunits: a, b and c.

The protein resides in the cell membrane. Produces ATP from ADP in the presence of a proton gradient across the membrane. The sequence is that of ATP synthase epsilon chain from Bacillus mycoides (strain KBAB4) (Bacillus weihenstephanensis).